We begin with the raw amino-acid sequence, 127 residues long: KP4 killer toxin (127 aa).

The first 22 residues, 1–22 (MQIINVVYSFLFAAAMLPVVHS), serve as a signal peptide directing secretion. 5 disulfide bridges follow: Cys-27-Cys-100, Cys-33-Cys-103, Cys-49-Cys-89, Cys-57-Cys-82, and Cys-66-Cys-127.

As to quaternary structure, monomer.

It is found in the secreted. This protein is lethal to sensitive cells of the same or related species. It specifically inhibits voltage-gated calcium channels. It inhibits cell growth and division by blocking calcium import. This chain is KP4 killer toxin (M2A), found in Mycosarcoma maydis (Corn smut fungus).